Consider the following 242-residue polypeptide: Ribonuclease 3 (242 aa).

The 137-residue stretch at 10–146 folds into the RNase III domain; sequence LQNFNKKFAD…FVGALYLDQG (137 aa). E59 is a Mg(2+) binding site. D63 is an active-site residue. Positions 132 and 135 each coordinate Mg(2+). The active site involves E135. A DRBM domain is found at 172 to 241; that stretch reads DFKTQFQELI…AEKAYNDMKK (70 aa). The segment at 216-242 is disordered; sequence VAKGQGRTKKESEQKAAEKAYNDMKKK. Over residues 223-242 the composition is skewed to basic and acidic residues; that stretch reads TKKESEQKAAEKAYNDMKKK.

It belongs to the ribonuclease III family. As to quaternary structure, homodimer. The cofactor is Mg(2+).

The protein localises to the cytoplasm. The enzyme catalyses Endonucleolytic cleavage to 5'-phosphomonoester.. In terms of biological role, digests double-stranded RNA. Involved in the processing of primary rRNA transcript to yield the immediate precursors to the large and small rRNAs (23S and 16S). Processes some mRNAs, and tRNAs when they are encoded in the rRNA operon. Processes pre-crRNA and tracrRNA of type II CRISPR loci if present in the organism. The chain is Ribonuclease 3 from Staphylococcus carnosus (strain TM300).